The primary structure comprises 273 residues: Cytochrome b-c1 complex subunit Rieske, mitochondrial (273 aa).

Residues 1–61 (MLRVAGRRLS…PFFVASRGFS (61 aa)) constitute a mitochondrion transit peptide. Residues 25 to 46 (PLAGAGVPDRDDDSARGRSQPR) are disordered. Residues 62–110 (STETVVPRNQDAGLADLPATVAAVKNPNPKVVYDEYNHERYPPGDPSKR) lie on the Mitochondrial matrix side of the membrane. Residues 111–133 (AFAYFVLSGGRFIYASLLRLLVL) form a helical membrane-spanning segment. Over 134 to 273 (KFVLSMSASK…FLEENKLLVG (140 aa)) the chain is Mitochondrial intermembrane. Residues 176–271 (RRRTEDDIKL…YSFLEENKLL (96 aa)) enclose the Rieske domain. Residues cysteine 216, histidine 218, cysteine 235, and histidine 238 each coordinate [2Fe-2S] cluster. Cysteines 221 and 237 form a disulfide.

The protein belongs to the Rieske iron-sulfur protein family. As to quaternary structure, component of the ubiquinol-cytochrome c oxidoreductase (cytochrome b-c1 complex, complex III, CIII), a multisubunit enzyme composed of 3 respiratory subunits cytochrome b, cytochrome c1 and Rieske protein, 2 core protein subunits, and several low-molecular weight protein subunits. The complex exists as an obligatory dimer and forms supercomplexes (SCs) in the inner mitochondrial membrane with cytochrome c oxidase (complex IV, CIV). [2Fe-2S] cluster is required as a cofactor.

It is found in the mitochondrion inner membrane. The enzyme catalyses a quinol + 2 Fe(III)-[cytochrome c](out) = a quinone + 2 Fe(II)-[cytochrome c](out) + 2 H(+)(out). Functionally, component of the ubiquinol-cytochrome c oxidoreductase, a multisubunit transmembrane complex that is part of the mitochondrial electron transport chain which drives oxidative phosphorylation. The respiratory chain contains 3 multisubunit complexes succinate dehydrogenase (complex II, CII), ubiquinol-cytochrome c oxidoreductase (cytochrome b-c1 complex, complex III, CIII) and cytochrome c oxidase (complex IV, CIV), that cooperate to transfer electrons derived from NADH and succinate to molecular oxygen, creating an electrochemical gradient over the inner membrane that drives transmembrane transport and the ATP synthase. The cytochrome b-c1 complex catalyzes electron transfer from ubiquinol to cytochrome c, linking this redox reaction to translocation of protons across the mitochondrial inner membrane, with protons being carried across the membrane as hydrogens on the quinol. In the process called Q cycle, 2 protons are consumed from the matrix, 4 protons are released into the intermembrane space and 2 electrons are passed to cytochrome c. The Rieske protein is a catalytic core subunit containing a [2Fe-2S] iron-sulfur cluster. It cycles between 2 conformational states during catalysis to transfer electrons from the quinol bound in the Q(0) site in cytochrome b to cytochrome c1. The chain is Cytochrome b-c1 complex subunit Rieske, mitochondrial from Zea mays (Maize).